Here is a 398-residue protein sequence, read N- to C-terminus: Succinate--CoA ligase [ADP-forming] subunit beta (398 aa).

In terms of domain architecture, ATP-grasp spans Lys-9 to Glu-254. Residues Lys-46, Gly-53 to Gly-55, Glu-109, Ala-112, and Glu-117 contribute to the ATP site. Mg(2+)-binding residues include Asn-209 and Asp-223. Residues Asn-274 and Gly-331–Met-333 each bind substrate.

It belongs to the succinate/malate CoA ligase beta subunit family. In terms of assembly, heterotetramer of two alpha and two beta subunits. It depends on Mg(2+) as a cofactor.

It catalyses the reaction succinate + ATP + CoA = succinyl-CoA + ADP + phosphate. The enzyme catalyses GTP + succinate + CoA = succinyl-CoA + GDP + phosphate. It functions in the pathway carbohydrate metabolism; tricarboxylic acid cycle; succinate from succinyl-CoA (ligase route): step 1/1. In terms of biological role, succinyl-CoA synthetase functions in the citric acid cycle (TCA), coupling the hydrolysis of succinyl-CoA to the synthesis of either ATP or GTP and thus represents the only step of substrate-level phosphorylation in the TCA. The beta subunit provides nucleotide specificity of the enzyme and binds the substrate succinate, while the binding sites for coenzyme A and phosphate are found in the alpha subunit. The protein is Succinate--CoA ligase [ADP-forming] subunit beta of Bartonella quintana (strain Toulouse) (Rochalimaea quintana).